We begin with the raw amino-acid sequence, 814 residues long: Rap guanine nucleotide exchange factor 5 (814 aa).

One can recognise a DEP domain in the interval 43–118; the sequence is LQAADLVKDR…DNYVFYQFSS (76 aa). The N-terminal Ras-GEF domain occupies 301–434; that stretch reads ARYVVVSGTP…ELKEFQKILG (134 aa). Residues 578–813 form the Ras-GEF domain; it reads NTWDLALELM…FELSHRLEPR (236 aa).

It localises to the nucleus. In terms of biological role, guanine nucleotide exchange factor (GEF) for RAP1A, RAP2A and MRAS/M-Ras-GTP. Its association with MRAS inhibits Rap1 activation. The polypeptide is Rap guanine nucleotide exchange factor 5 (Rapgef5) (Mus musculus (Mouse)).